The sequence spans 476 residues: Sulfate adenylyltransferase subunit 1 (476 aa).

Positions 25–241 (KSLLRFLTCG…LETVEVQRVV (217 aa)) constitute a tr-type G domain. The interval 34-41 (GSVDDGKS) is G1. 34–41 (GSVDDGKS) lines the GTP pocket. Residues 92-96 (GITID) are G2. A G3 region spans residues 113–116 (DTPG). Residues 113–117 (DTPGH) and 168–171 (NKMD) contribute to the GTP site. Residues 168–171 (NKMD) form a G4 region. Residues 206-208 (SAL) form a G5 region.

This sequence belongs to the TRAFAC class translation factor GTPase superfamily. Classic translation factor GTPase family. CysN/NodQ subfamily. As to quaternary structure, heterodimer composed of CysD, the smaller subunit, and CysN.

It carries out the reaction sulfate + ATP + H(+) = adenosine 5'-phosphosulfate + diphosphate. Its pathway is sulfur metabolism; hydrogen sulfide biosynthesis; sulfite from sulfate: step 1/3. Its function is as follows. With CysD forms the ATP sulfurylase (ATPS) that catalyzes the adenylation of sulfate producing adenosine 5'-phosphosulfate (APS) and diphosphate, the first enzymatic step in sulfur assimilation pathway. APS synthesis involves the formation of a high-energy phosphoric-sulfuric acid anhydride bond driven by GTP hydrolysis by CysN coupled to ATP hydrolysis by CysD. This Erwinia tasmaniensis (strain DSM 17950 / CFBP 7177 / CIP 109463 / NCPPB 4357 / Et1/99) protein is Sulfate adenylyltransferase subunit 1.